Here is a 633-residue protein sequence, read N- to C-terminus: Polypeptide N-acetylgalactosaminyltransferase 3 (633 aa).

The Cytoplasmic segment spans residues 1–19 (MAHLKRLVKLHIKRHYHRK). The chain crosses the membrane as a helical; Signal-anchor for type II membrane protein span at residues 20-37 (FWKLGAVIFFFLVVLILM). Topologically, residues 38–633 (QREVSVQYSK…LQKWIFSQND (596 aa)) are lumenal. The interval 112-145 (DRPPQDSNAPGASGKPFKITHLSPEEQKEKERGE) is disordered. A compositionally biased stretch (basic and acidic residues) spans 134–145 (SPEEQKEKERGE). The interval 184-293 (LPTTSVIIVF…YGWLEPLLAR (110 aa)) is catalytic subdomain A. Positions 277 and 279 each coordinate Mn(2+). N-linked (GlcNAc...) asparagine glycosylation occurs at N297. The tract at residues 356–418 (PIKTPTFAGG…PCSVVGHVFR (63 aa)) is catalytic subdomain B. H415 serves as a coordination point for Mn(2+). N484 is a glycosylation site (N-linked (GlcNAc...) asparagine). In terms of domain architecture, Ricin B-type lectin spans 504–630 (VISGYIKSVG…TDLLQKWIFS (127 aa)). C517 and C535 are oxidised to a cystine. Positions 519, 522, 536, and 541 each coordinate UDP-N-acetyl-alpha-D-galactosamine. 2 disulfides stabilise this stretch: C561–C574 and C605–C618.

The protein belongs to the glycosyltransferase 2 family. GalNAc-T subfamily. Requires Mn(2+) as cofactor. As to expression, highly expressed in the reproductive tract, principally in the testis and uterus, and to a lesser degree in the cervix with only trace levels in the ovary. Also expressed at high level in sublingual gland, stomach and colon, with more moderate amounts present in the submandibular and parotid gland as well as the kidney.

It is found in the golgi apparatus. The protein localises to the golgi stack membrane. The enzyme catalyses L-seryl-[protein] + UDP-N-acetyl-alpha-D-galactosamine = a 3-O-[N-acetyl-alpha-D-galactosaminyl]-L-seryl-[protein] + UDP + H(+). The catalysed reaction is L-threonyl-[protein] + UDP-N-acetyl-alpha-D-galactosamine = a 3-O-[N-acetyl-alpha-D-galactosaminyl]-L-threonyl-[protein] + UDP + H(+). The protein operates within protein modification; protein glycosylation. Its function is as follows. Catalyzes the initial reaction in O-linked oligosaccharide biosynthesis, the transfer of an N-acetyl-D-galactosamine residue to a serine or threonine residue on the protein receptor. Has activity toward HIV envelope glycoprotein gp120. Has activity towards EA2, MUC2 and MUC5. Probably glycosylates fibronectin in vivo. Glycosylates FGF23. The chain is Polypeptide N-acetylgalactosaminyltransferase 3 (Galnt3) from Mus musculus (Mouse).